A 408-amino-acid chain; its full sequence is Multidrug resistance protein MdtG (408 aa).

Helical transmembrane passes span 13-33, 51-71, 89-109, 112-132, 138-158, 170-190, 221-241, 253-273, 287-307, and 375-395; these read LYIA…VMPF, LWSG…SPFW, LGMA…QFLL, AALG…AIQV, GWAL…GPLL, PVFF…FFFI, LFVT…ILTL, LAFI…LSAP, ILVA…FVQS, and AVFL…WLSL.

Belongs to the major facilitator superfamily. DHA1 family. MdtG (TC 2.A.1.2.20) subfamily.

The protein resides in the cell inner membrane. The chain is Multidrug resistance protein MdtG from Dickeya zeae (strain Ech586) (Dickeya dadantii (strain Ech586)).